Here is a 433-residue protein sequence, read N- to C-terminus: Legumain (433 aa).

The signal sequence occupies residues 1 to 17; it reads MVWKVAVFLSAALVIGA. A glycan (N-linked (GlcNAc...) asparagine) is linked at asparagine 91. The active site involves histidine 148. Asparagine 167 is a glycosylation site (N-linked (GlcNAc...) asparagine). Cysteine 189 serves as the catalytic Nucleophile. 2 N-linked (GlcNAc...) asparagine glycosylation sites follow: asparagine 263 and asparagine 272. A propeptide spanning residues 324–433 is cleaved from the precursor; it reads DLEESRQLTE…SMDHVCLGHY (110 aa). Intrachain disulfides connect cysteine 378–cysteine 412 and cysteine 390–cysteine 429.

It belongs to the peptidase C13 family. Homodimer before autocatalytic removal of the propeptide. Monomer after autocatalytic processing. May interact with integrins. Activated by autocatalytic processing at pH 4.

Its subcellular location is the lysosome. It carries out the reaction Hydrolysis of proteins and small molecule substrates at -Asn-|-Xaa- bonds.. In terms of biological role, has a strict specificity for hydrolysis of asparaginyl bonds. Can also cleave aspartyl bonds slowly, especially under acidic conditions. Involved in the processing of proteins for MHC class II antigen presentation in the lysosomal/endosomal system. Also involved in MHC class I antigen presentation in cross-presenting dendritic cells by mediating cleavage and maturation of Perforin-2 (MPEG1), thereby promoting antigen translocation in the cytosol. Required for normal lysosomal protein degradation in renal proximal tubules. Required for normal degradation of internalized EGFR. Plays a role in the regulation of cell proliferation via its role in EGFR degradation. The polypeptide is Legumain (LGMN) (Pongo abelii (Sumatran orangutan)).